The sequence spans 69 residues: Putative membrane protein insertion efficiency factor (69 aa).

Belongs to the UPF0161 family.

The protein localises to the cell inner membrane. In terms of biological role, could be involved in insertion of integral membrane proteins into the membrane. This Nitrosomonas europaea (strain ATCC 19718 / CIP 103999 / KCTC 2705 / NBRC 14298) protein is Putative membrane protein insertion efficiency factor.